The following is a 554-amino-acid chain: Hydroxylamine reductase (554 aa).

The [2Fe-2S] cluster site is built by cysteine 3, cysteine 6, cysteine 18, and cysteine 25. Hybrid [4Fe-2O-2S] cluster-binding residues include histidine 252, glutamate 276, cysteine 320, cysteine 408, cysteine 436, cysteine 461, glutamate 495, and lysine 497. At cysteine 408 the chain carries Cysteine persulfide.

It belongs to the HCP family. [2Fe-2S] cluster is required as a cofactor. Hybrid [4Fe-2O-2S] cluster serves as cofactor.

The protein resides in the cytoplasm. It catalyses the reaction A + NH4(+) + H2O = hydroxylamine + AH2 + H(+). In terms of biological role, catalyzes the reduction of hydroxylamine to form NH(3) and H(2)O. This is Hydroxylamine reductase from Shewanella loihica (strain ATCC BAA-1088 / PV-4).